The sequence spans 372 residues: Phospho-N-acetylmuramoyl-pentapeptide-transferase (372 aa).

The next 10 membrane-spanning stretches (helical) occupy residues 25-45 (RSLLSILTSLAIGLMLGPVMI), 73-93 (TMGGVLILMSIGISTLLWADL), 98-118 (VWIVLGVMVVFGAVGWADDWI), 134-154 (FFWTSVASLGAGISLYVIAQN), 176-196 (SIPLSAVPLGIAFIIFTYLVI), 211-231 (GLAIMPIVMVAAGLGVFAYLA), 251-271 (LVVICSAMVGAGLAFLWYNAH), 275-295 (IFMGDVGALALGAMLGTIAVM), 300-320 (IVFAIMGGVFVMEAISVFLQI), and 349-369 (QVVTRFWIITIMLVVLGLMTL).

It belongs to the glycosyltransferase 4 family. MraY subfamily. Mg(2+) is required as a cofactor.

It is found in the cell inner membrane. It catalyses the reaction UDP-N-acetyl-alpha-D-muramoyl-L-alanyl-gamma-D-glutamyl-meso-2,6-diaminopimeloyl-D-alanyl-D-alanine + di-trans,octa-cis-undecaprenyl phosphate = di-trans,octa-cis-undecaprenyl diphospho-N-acetyl-alpha-D-muramoyl-L-alanyl-D-glutamyl-meso-2,6-diaminopimeloyl-D-alanyl-D-alanine + UMP. The protein operates within cell wall biogenesis; peptidoglycan biosynthesis. Functionally, catalyzes the initial step of the lipid cycle reactions in the biosynthesis of the cell wall peptidoglycan: transfers peptidoglycan precursor phospho-MurNAc-pentapeptide from UDP-MurNAc-pentapeptide onto the lipid carrier undecaprenyl phosphate, yielding undecaprenyl-pyrophosphoryl-MurNAc-pentapeptide, known as lipid I. The protein is Phospho-N-acetylmuramoyl-pentapeptide-transferase of Acinetobacter baylyi (strain ATCC 33305 / BD413 / ADP1).